The sequence spans 195 residues: Thymidylate kinase (195 aa).

7–14 (GVDTCGKS) provides a ligand contact to ATP.

Belongs to the thymidylate kinase family.

The enzyme catalyses dTMP + ATP = dTDP + ADP. In terms of biological role, phosphorylation of dTMP to form dTDP in both de novo and salvage pathways of dTTP synthesis. The sequence is that of Thymidylate kinase from Helicobacter hepaticus (strain ATCC 51449 / 3B1).